The chain runs to 295 residues: Cell shape-determining protein MreC (295 aa).

An N-terminal signal peptide occupies residues 1–34 (MPQFFLNKRLIILLISIIVLVALVGFSLRDRENA). A coiled-coil region spans residues 66–112 (VVDLKNTYTENQHLKERLEELAQLESEVADLKKENKDLKESLDITDS). The segment at 276-295 (SAEAGTTDDDTTSSDTTGGQ) is disordered.

Belongs to the MreC family. As to quaternary structure, homooligomer of 24 subunits, arranged as 12 dimers.

Its function is as follows. Involved in formation and maintenance of cell shape. The protein is Cell shape-determining protein MreC of Listeria monocytogenes serovar 1/2a (strain ATCC BAA-679 / EGD-e).